Here is a 148-residue protein sequence, read N- to C-terminus: Endothelial differentiation-related factor 1 (148 aa).

Ala-2 carries the N-acetylalanine modification. Ser-4 carries the post-translational modification Phosphoserine. Lys-25 bears the N6-methyllysine mark. A compositionally biased stretch (basic and acidic residues) spans 33-42 (RRGEDVETSK). Residues 33–66 (RRGEDVETSKKWAAGQNKQHSITKNTAKLDRETE) are disordered. Residues 37 to 113 (DVETSKKWAA…QVIADYESGR (77 aa)) form an interaction with NR5A2, PPARG and NR1H3 region. Polar residues predominate over residues 48-58 (QNKQHSITKNT). Residues 69-108 (HHDRVTLEVGKVIQQGRQSKGLTQKDLATKINEKPQVIAD) form an interaction with TBP and NR5A1 region. Positions 81–88 (IQQGRQSK) match the IQ motif motif. An HTH cro/C1-type domain is found at 81–135 (IQQGRQSKGLTQKDLATKINEKPQVIADYESGRAIPNNQVLGKIERAIGLKLRGK). Positions 92–111 (QKDLATKINEKPQVIADYES) form a DNA-binding region, H-T-H motif.

Interacts with TBP and the transcription factor IID (TFIID) complex, NR5A2, NR1H3 and PPARG. Interaction with TBP is regulated by phosphorylation. Binds NR5A1, ATF1, FOS and JUN via their conserved basic region. Binding to calmodulin is regulated by calcium and phosphorylation of the IQ motif. Phosphorylated (by PKA and PKC). As to expression, expressed in brain, liver, lung, kidney and heart (at protein level). Ubiquitously expressed. More abundant in heart, pancreas, liver, intestine and adipose tissues.

The protein resides in the cytoplasm. It is found in the nucleus. Transcriptional coactivator stimulating NR5A1 and ligand-dependent NR1H3/LXRA and PPARG transcriptional activities. Enhances the DNA-binding activity of ATF1, ATF2, CREB1 and NR5A1. Regulates nitric oxid synthase activity probably by sequestering calmodulin in the cytoplasm. May function in endothelial cells differentiation, hormone-induced cardiomyocytes hypertrophy and lipid metabolism. This chain is Endothelial differentiation-related factor 1 (EDF1), found in Homo sapiens (Human).